The chain runs to 259 residues: MTRDQTATFGRHALRVAGSGLLVAGVVALGLLGWQWRANVTVDRVAVTGAQHAPPDTLRRLARVGRGTAMRAVAPMLVADRVARHPWVKEATAETQWMQGALTISVTERTPAALAVDAQGRPAYYLDRSGHAMPLPDSAGYDVPLVRGLEAEAPWTQPDTAQTPSSLRRVLRALPEAGVADLVAEIEMQPDDAIQLTTTPIGPHDALPVHLGSGNVSRKLRTLRAFARQVLASSPDEPIERIDLRFDGQVVTRTRPLDG.

Topologically, residues 1–15 are cytoplasmic; it reads MTRDQTATFGRHALR. Residues 16-36 traverse the membrane as a helical segment; that stretch reads VAGSGLLVAGVVALGLLGWQW. Topologically, residues 37–259 are periplasmic; the sequence is RANVTVDRVA…VVTRTRPLDG (223 aa). A POTRA domain is found at 40–109; that stretch reads VTVDRVAVTG…GALTISVTER (70 aa).

This sequence belongs to the FtsQ/DivIB family. FtsQ subfamily.

Its subcellular location is the cell inner membrane. Essential cell division protein. This chain is Cell division protein FtsQ, found in Salinibacter ruber (strain DSM 13855 / M31).